A 563-amino-acid polypeptide reads, in one-letter code: MTTQNRFRDNEIRAPQGTQLTAKSWLTEAALRMLMNNLDPDVAENPKELVVYGGIGRAARNWECYDKIVESLINLNDDETLLIQSGKPVGIFKTHSNAPRVLIANSNLVPHWANWEHFNELDAKGLAMYGQMTAGSWIYIGSQGIVQGTYETFVEAGRQHFGGSLKGRWVLTAGLGGMGGAQPLAATLAGACSLNIECQQSRIDFRLKTRYVDEQATDLDDALARIEKYTATGVAVSIALCGNAAEILPELVRRGVRPDMVTDQTSAHDPLNGYLPKGWNWEEYRQRAQHEPALVINAAKISMAEHVEAMLAFHNMGIPTFDYGNNIRQMAHDMGVIRAFDFPGFVPAYIRPLFCRGIGPFRWVALSGNPDDIYKTDAKVKALIPDDAHLHHWLDMARERIRFQGLPARICWVGLGQRAKLGLAFNEMVRSGELSAPVVIGRDHLDSGSVASPNRETEAMQDGSDAVSDWPLLNALLNTASGATWVSLHHGGGVGMGFSQHSGMVVVCDGSDEAAERIARVLHNDPATGVMRHADAGYDIAVNCAQEQGLNLPMVAATQGKKS.

NAD(+) is bound by residues 53–54, Q131, 177–179, E197, R202, 243–244, 264–268, 274–275, and Y323; these read GG, GMG, NA, QTSAH, and YL. C411 is an active-site residue. Residue G493 participates in NAD(+) binding.

The protein belongs to the urocanase family. Requires NAD(+) as cofactor.

It is found in the cytoplasm. The catalysed reaction is 4-imidazolone-5-propanoate = trans-urocanate + H2O. The protein operates within amino-acid degradation; L-histidine degradation into L-glutamate; N-formimidoyl-L-glutamate from L-histidine: step 2/3. Functionally, catalyzes the conversion of urocanate to 4-imidazolone-5-propionate. The protein is Urocanate hydratase of Yersinia pestis bv. Antiqua (strain Antiqua).